We begin with the raw amino-acid sequence, 293 residues long: Ribosomal protein L11 methyltransferase (293 aa).

Positions 145, 166, 188, and 229 each coordinate S-adenosyl-L-methionine.

The protein belongs to the methyltransferase superfamily. PrmA family.

It localises to the cytoplasm. The enzyme catalyses L-lysyl-[protein] + 3 S-adenosyl-L-methionine = N(6),N(6),N(6)-trimethyl-L-lysyl-[protein] + 3 S-adenosyl-L-homocysteine + 3 H(+). In terms of biological role, methylates ribosomal protein L11. The protein is Ribosomal protein L11 methyltransferase of Halorhodospira halophila (strain DSM 244 / SL1) (Ectothiorhodospira halophila (strain DSM 244 / SL1)).